The following is a 199-amino-acid chain: Thioredoxin peroxidase (199 aa).

A Thioredoxin domain is found at 6-165 (AKLNHPAPHF…TLRLVKAFQF (160 aa)). Cysteine 52 serves as the catalytic Cysteine sulfenic acid (-SOH) intermediate. The segment at 179–199 (PGSKTMKADPNGSQDYFSSMN) is disordered. Positions 189–199 (NGSQDYFSSMN) are enriched in polar residues.

This sequence belongs to the peroxiredoxin family. AhpC/Prx1 subfamily. In terms of assembly, homodimer; disulfide-linked, upon oxidation.

It catalyses the reaction a hydroperoxide + [thioredoxin]-dithiol = an alcohol + [thioredoxin]-disulfide + H2O. Functionally, thiol-specific peroxidase that catalyzes the reduction of hydrogen peroxide and organic hydroperoxides to water and alcohols, respectively. Plays a role in cell protection against oxidative stress by detoxifying peroxides and as sensor of hydrogen peroxide-mediated signaling events. The sequence is that of Thioredoxin peroxidase from Trypanosoma brucei rhodesiense.